The chain runs to 465 residues: Uridine kinase-like protein 5 (465 aa).

The tract at residues 26–230 (LKQPFVIGVA…IVQHIRTKLC (205 aa)) is uridine kinase. The tract at residues 240-465 (NIFIISSTFQ…SLSTNLKLRS (226 aa)) is uracil phosphoribosyltransferase. GTP-binding positions include Lys264, Arg273, and 307 to 310 (CKRL). Positions 317 and 342 each coordinate 5-phospho-alpha-D-ribose 1-diphosphate. Arg362 serves as a coordination point for GTP. 5-phospho-alpha-D-ribose 1-diphosphate is bound by residues Asp368, 373–376 (SGYS), and Glu439. Uracil is bound at residue 438–440 (GEF).

In the N-terminal section; belongs to the uridine kinase family. This sequence in the C-terminal section; belongs to the UPRTase family. It depends on Mg(2+) as a cofactor.

It carries out the reaction UMP + diphosphate = 5-phospho-alpha-D-ribose 1-diphosphate + uracil. It catalyses the reaction cytidine + ATP = CMP + ADP + H(+). The catalysed reaction is uridine + ATP = UMP + ADP + H(+). It functions in the pathway pyrimidine metabolism; UMP biosynthesis via salvage pathway; UMP from uracil: step 1/1. Its pathway is pyrimidine metabolism; CTP biosynthesis via salvage pathway; CTP from cytidine: step 1/3. It participates in pyrimidine metabolism; UMP biosynthesis via salvage pathway; UMP from uridine: step 1/1. Allosterically activated by GTP. In terms of biological role, involved in the pyrimidine salvage pathway. This is Uridine kinase-like protein 5 (UKL5) from Arabidopsis thaliana (Mouse-ear cress).